The chain runs to 353 residues: Photosystem II D2 protein (353 aa).

Thr-2 is modified (N-acetylthreonine). Thr-2 bears the Phosphothreonine mark. Residues 41–61 (CAYFALGGWFTGTTFVTSWYT) form a helical membrane-spanning segment. His-118 lines the chlorophyll a pocket. Residues 125 to 141 (GFMLRQFELARSVQLRP) form a helical membrane-spanning segment. Gln-130 and Asn-143 together coordinate pheophytin a. The helical transmembrane segment at 153–166 (VFVSVFLIYPLGQS) threads the bilayer. His-198 provides a ligand contact to chlorophyll a. The chain crosses the membrane as a helical span at residues 208-228 (AALLCAIHGATVENTLFEDGD). 2 residues coordinate a plastoquinone: His-215 and Phe-262. His-215 serves as a coordination point for Fe cation. Fe cation is bound at residue His-269. The chain crosses the membrane as a helical span at residues 279-295 (GLWMSALGVVGLALNLR).

Belongs to the reaction center PufL/M/PsbA/D family. PSII is composed of 1 copy each of membrane proteins PsbA, PsbB, PsbC, PsbD, PsbE, PsbF, PsbH, PsbI, PsbJ, PsbK, PsbL, PsbM, PsbT, PsbX, PsbY, PsbZ, Psb30/Ycf12, at least 3 peripheral proteins of the oxygen-evolving complex and a large number of cofactors. It forms dimeric complexes. It depends on The D1/D2 heterodimer binds P680, chlorophylls that are the primary electron donor of PSII, and subsequent electron acceptors. It shares a non-heme iron and each subunit binds pheophytin, quinone, additional chlorophylls, carotenoids and lipids. There is also a Cl(-1) ion associated with D1 and D2, which is required for oxygen evolution. The PSII complex binds additional chlorophylls, carotenoids and specific lipids. as a cofactor.

The protein resides in the plastid. It localises to the chloroplast thylakoid membrane. The catalysed reaction is 2 a plastoquinone + 4 hnu + 2 H2O = 2 a plastoquinol + O2. Functionally, photosystem II (PSII) is a light-driven water:plastoquinone oxidoreductase that uses light energy to abstract electrons from H(2)O, generating O(2) and a proton gradient subsequently used for ATP formation. It consists of a core antenna complex that captures photons, and an electron transfer chain that converts photonic excitation into a charge separation. The D1/D2 (PsbA/PsbD) reaction center heterodimer binds P680, the primary electron donor of PSII as well as several subsequent electron acceptors. D2 is needed for assembly of a stable PSII complex. This Nandina domestica (Heavenly bamboo) protein is Photosystem II D2 protein.